We begin with the raw amino-acid sequence, 151 residues long: SsrA-binding protein (151 aa).

The protein belongs to the SmpB family.

The protein resides in the cytoplasm. Functionally, required for rescue of stalled ribosomes mediated by trans-translation. Binds to transfer-messenger RNA (tmRNA), required for stable association of tmRNA with ribosomes. tmRNA and SmpB together mimic tRNA shape, replacing the anticodon stem-loop with SmpB. tmRNA is encoded by the ssrA gene; the 2 termini fold to resemble tRNA(Ala) and it encodes a 'tag peptide', a short internal open reading frame. During trans-translation Ala-aminoacylated tmRNA acts like a tRNA, entering the A-site of stalled ribosomes, displacing the stalled mRNA. The ribosome then switches to translate the ORF on the tmRNA; the nascent peptide is terminated with the 'tag peptide' encoded by the tmRNA and targeted for degradation. The ribosome is freed to recommence translation, which seems to be the essential function of trans-translation. The polypeptide is SsrA-binding protein (Campylobacter fetus subsp. fetus (strain 82-40)).